Here is a 478-residue protein sequence, read N- to C-terminus: Cytochrome c-552 (478 aa).

An N-terminal signal peptide occupies residues 1–26 (MARKTLRARRFFSLIFPFFFMTSVYA). Histidine 94 is a binding site for heme c. The heme site is built by cysteine 122, cysteine 125, and lysine 126. The heme c site is built by cysteine 160, cysteine 163, histidine 164, cysteine 209, cysteine 212, and histidine 213. Residues glutamate 215, tyrosine 216, lysine 261, and glutamine 263 each contribute to the Ca(2+) site. Residue tyrosine 216 participates in substrate binding. Histidine 264 lines the substrate pocket. Residues histidine 275, cysteine 282, cysteine 285, histidine 286, histidine 301, cysteine 314, cysteine 317, histidine 318, and histidine 393 each coordinate heme c.

Belongs to the cytochrome c-552 family. The cofactor is Ca(2+). Heme c is required as a cofactor.

The protein localises to the periplasm. It catalyses the reaction 6 Fe(III)-[cytochrome c] + NH4(+) + 2 H2O = 6 Fe(II)-[cytochrome c] + nitrite + 8 H(+). The protein operates within nitrogen metabolism; nitrate reduction (assimilation). Functionally, catalyzes the reduction of nitrite to ammonia, consuming six electrons in the process. The sequence is that of Cytochrome c-552 from Salmonella arizonae (strain ATCC BAA-731 / CDC346-86 / RSK2980).